The chain runs to 305 residues: MPKVGIIYNDIKPVAGRVAIELKDKLTTAGWDVSITSSIGGILGYSNPESPVCHTPIDGLTPPGFDSEMKFAIVLGGDGTVLAASRQVAPCGIPILAINTGHMGFLTETYLNQLPQAIDQAIAGEYEIEERAMLTVKVLRGESVLWEALCLNEMVLHREPLTSMCHFEIAVGRHAPVDIAADGVIVSTPTGSTAYSLSAGGPVVTPGVPALQLVPICPHSLASRALVFPDTEPVNIYPVNIPRLVMVVDGNGGCYIFPEDRVYLERSPYSVKFIRLQPPEFFRILREKLGWGLPHIAKPTSVELP.

Asp-78 acts as the Proton acceptor in catalysis. Residues 78–79 (DG), 152–153 (NE), Asp-182, 193–198 (TAYSLS), and Asn-251 each bind NAD(+).

Belongs to the NAD kinase family. A divalent metal cation serves as cofactor.

Its subcellular location is the cytoplasm. The enzyme catalyses NAD(+) + ATP = ADP + NADP(+) + H(+). In terms of biological role, involved in the regulation of the intracellular balance of NAD and NADP, and is a key enzyme in the biosynthesis of NADP. Catalyzes specifically the phosphorylation on 2'-hydroxyl of the adenosine moiety of NAD to yield NADP. This chain is NAD kinase 2, found in Trichormus variabilis (strain ATCC 29413 / PCC 7937) (Anabaena variabilis).